The primary structure comprises 432 residues: Succinate--CoA ligase [GDP-forming] subunit beta, mitochondrial (432 aa).

The transit peptide at Met-1–Trp-37 directs the protein to the mitochondrion. Residues Lys-46 to Phe-274 enclose the ATP-grasp domain. Position 57 (Gln-57) interacts with GTP. Lys-73 carries the post-translational modification N6-acetyllysine. Position 78 is an N6-succinyllysine (Lys-78). Gly-90 to Gly-92 serves as a coordination point for GTP. N6-acetyllysine occurs at positions 132 and 139. Leu-146 serves as a coordination point for GTP. Ser-161 carries the phosphoserine modification. An N6-acetyllysine mark is found at Lys-200, Lys-218, and Lys-227. Positions 243 and 257 each coordinate Mg(2+). 2 positions are modified to N6-acetyllysine: Lys-271 and Lys-291. A substrate-binding site is contributed by Asn-308. At Lys-338 the chain carries N6-succinyllysine. The residue at position 347 (Lys-347) is an N6-acetyllysine. Gly-365–Val-367 serves as a coordination point for substrate. N6-acetyllysine occurs at positions 386 and 423.

The protein belongs to the succinate/malate CoA ligase beta subunit family. GTP-specific subunit beta subfamily. In terms of assembly, heterodimer of an alpha and a beta subunit. The beta subunit determines specificity for GTP. The cofactor is Mg(2+). As to expression, mainly expressed in liver, kidney, heart, spleen and skeletal muscle. Also found in intestine and colon, and in low amounts in lung, brain, prostate, testis and ovary.

The protein localises to the mitochondrion. The enzyme catalyses GTP + succinate + CoA = succinyl-CoA + GDP + phosphate. It participates in carbohydrate metabolism; tricarboxylic acid cycle; succinate from succinyl-CoA (ligase route): step 1/1. Its function is as follows. GTP-specific succinyl-CoA synthetase functions in the citric acid cycle (TCA), coupling the hydrolysis of succinyl-CoA to the synthesis of GTP and thus represents the only step of substrate-level phosphorylation in the TCA. The beta subunit provides nucleotide specificity of the enzyme and binds the substrate succinate, while the binding sites for coenzyme A and phosphate are found in the alpha subunit. In Homo sapiens (Human), this protein is Succinate--CoA ligase [GDP-forming] subunit beta, mitochondrial.